Consider the following 101-residue polypeptide: Large ribosomal subunit protein bL21 (101 aa).

Belongs to the bacterial ribosomal protein bL21 family. In terms of assembly, part of the 50S ribosomal subunit. Contacts protein L20.

This protein binds to 23S rRNA in the presence of protein L20. The protein is Large ribosomal subunit protein bL21 of Magnetococcus marinus (strain ATCC BAA-1437 / JCM 17883 / MC-1).